The following is a 166-amino-acid chain: Phospholipase A2 inhibitor clone 06/08 (166 aa).

An N-terminal signal peptide occupies residues 1–19 (MRLILLSGLLLLGIFLANG). Residues 46 to 161 (LRGAFLTVYK…CDDNLLVVCE (116 aa)) enclose the C-type lectin domain. N-linked (GlcNAc...) asparagine glycans are attached at residues Asn61 and Asn122. Cystine bridges form between Cys83-Cys160 and Cys138-Cys152.

It belongs to the alpha-type phospholipase A2 inhibitor family. As to quaternary structure, homotrimer; non-covalently linked. Expressed by the liver.

Its subcellular location is the secreted. This phospholipase A2 inhibitor binds directly phospholipase A2 in the presence or absence of calcium. The polypeptide is Phospholipase A2 inhibitor clone 06/08 (Bothrops neuwiedi (Neuwied's lancehead)).